We begin with the raw amino-acid sequence, 164 residues long: Telomerase-associated protein of 19 kDa (164 aa).

In terms of assembly, component of the telomerase holoenzyme complex, composed of the catalytic core (the catalytic subunit TERT, the telomerase RNA template component TER and TAP65/p65), which is associated with two heterotrimeric subcomplexes: (i) the replication protein A (RPA)-related subcomplex, composed of TEB1, RPA2/TEB2 and RPA3/TEB3 and (ii) the CST-like subcomplex, composed of TAP75/p75, TAP45/p45 and TAP19/p19. TEB1 and the CST-like subcomplex are tethered to the catalytic core by TAP50/p50.

The protein localises to the chromosome. It is found in the telomere. Its function is as follows. Component of a CST-like subcomplex of the holoenzyme telomerase ribonucleoprotein complex, which stimulates telomerase complementary-strand synthesis. Telomerase is an essential ribonucleoprotein enzyme that copies new telomeric repeats onto chromosome ends by repetitively synthesizing the short telomere-repeat sequence 5'-TTGGGG-3' using an RNA template component TER. The CST-like subcomplex (also named 7-4-1) binds telomeric single-stranded DNA and coordinates telomere G-strand and C-strand synthesis. This chain is Telomerase-associated protein of 19 kDa, found in Tetrahymena thermophila (strain SB210).